The following is a 301-amino-acid chain: Ethylmalonyl-CoA decarboxylase (301 aa).

N6-acetyllysine; alternate is present on K211. K211 bears the N6-succinyllysine; alternate mark. K295 carries the N6-succinyllysine modification.

This sequence belongs to the enoyl-CoA hydratase/isomerase family.

It localises to the cytoplasm. The protein resides in the cytosol. The enzyme catalyses (2S)-ethylmalonyl-CoA + H(+) = butanoyl-CoA + CO2. The catalysed reaction is (S)-methylmalonyl-CoA + H(+) = propanoyl-CoA + CO2. It catalyses the reaction (2R)-ethylmalonyl-CoA + H(+) = butanoyl-CoA + CO2. In terms of biological role, decarboxylates ethylmalonyl-CoA, a potentially toxic metabolite, to form butyryl-CoA, suggesting it might be involved in metabolite proofreading. Acts preferentially on (S)-ethylmalonyl-CoA but also has some activity on the (R)-isomer. Also has methylmalonyl-CoA decarboxylase activity at lower level. This is Ethylmalonyl-CoA decarboxylase (ECHDC1) from Pongo abelii (Sumatran orangutan).